Here is a 569-residue protein sequence, read N- to C-terminus: Proline--tRNA ligase (569 aa).

The protein belongs to the class-II aminoacyl-tRNA synthetase family. ProS type 1 subfamily. As to quaternary structure, homodimer.

Its subcellular location is the cytoplasm. The enzyme catalyses tRNA(Pro) + L-proline + ATP = L-prolyl-tRNA(Pro) + AMP + diphosphate. Catalyzes the attachment of proline to tRNA(Pro) in a two-step reaction: proline is first activated by ATP to form Pro-AMP and then transferred to the acceptor end of tRNA(Pro). As ProRS can inadvertently accommodate and process non-cognate amino acids such as alanine and cysteine, to avoid such errors it has two additional distinct editing activities against alanine. One activity is designated as 'pretransfer' editing and involves the tRNA(Pro)-independent hydrolysis of activated Ala-AMP. The other activity is designated 'posttransfer' editing and involves deacylation of mischarged Ala-tRNA(Pro). The misacylated Cys-tRNA(Pro) is not edited by ProRS. The sequence is that of Proline--tRNA ligase from Colwellia psychrerythraea (strain 34H / ATCC BAA-681) (Vibrio psychroerythus).